A 233-amino-acid polypeptide reads, in one-letter code: Synaptogyrin-4 (233 aa).

Residues 18 to 169 (FLRRPKSISR…QAYLAFQDLR (152 aa)) enclose the MARVEL domain. 4 helical membrane-spanning segments follow: residues 25 to 45 (ISRI…LTDG), 66 to 86 (CSFA…FLAI), 104 to 124 (LLDF…FCFL), and 145 to 165 (AAIA…YLAF). The interval 191–233 (SPSSTSPSNPPITGPNSLSYTSSALSPYMTTPKAPRLAMMPDS) is disordered. Polar residues predominate over residues 204–219 (GPNSLSYTSSALSPYM).

The protein belongs to the synaptogyrin family.

The protein localises to the membrane. The sequence is that of Synaptogyrin-4 (Syngr4) from Mus musculus (Mouse).